The chain runs to 235 residues: Probable ribosomal RNA small subunit methyltransferase A (235 aa).

S-adenosyl-L-methionine-binding residues include histidine 9, leucine 11, glycine 34, glutamate 55, aspartate 78, and asparagine 93.

The protein belongs to the class I-like SAM-binding methyltransferase superfamily. rRNA adenine N(6)-methyltransferase family. RsmA subfamily.

The protein localises to the cytoplasm. Its function is as follows. Specifically dimethylates two adjacent adenosines in the loop of a conserved hairpin near the 3'-end of 16S rRNA in the 30S particle. May play a critical role in biogenesis of 30S subunits. In Pyrobaculum islandicum (strain DSM 4184 / JCM 9189 / GEO3), this protein is Probable ribosomal RNA small subunit methyltransferase A.